We begin with the raw amino-acid sequence, 925 residues long: Antiviral innate immune response receptor RIG-I (925 aa).

CARD domains lie at methionine 1–glutamate 87 and tryptophan 92–lysine 172. At serine 8 the chain carries (Microbial infection) Phosphoserine. Serine 8 is subject to Phosphoserine. Residues lysine 48, lysine 96, lysine 154, and lysine 164 each participate in a glycyl lysine isopeptide (Lys-Gly) (interchain with G-Cter in ubiquitin) cross-link. Threonine 170 is subject to Phosphothreonine. Glycyl lysine isopeptide (Lys-Gly) (interchain with G-Cter in ubiquitin) cross-links involve residues lysine 172, lysine 181, lysine 193, and lysine 203. The segment at glutamate 218–lysine 925 is interaction with ZC3HAV1. In terms of domain architecture, Helicase ATP-binding spans alanine 251–leucine 430. Residue alanine 264–threonine 271 participates in ATP binding. Residues aspartate 372–histidine 375 carry the DECH box motif. Residues asparagine 495 and asparagine 549 each carry the (Microbial infection) Deamidated asparagine; by herpes simplex virus 1/HHV-1 UL37 modification. The region spanning lysine 610–phenylalanine 776 is the Helicase C-terminal domain. The segment at glycine 735 to lysine 925 is mediates interaction with RNF135. A Phosphothreonine; by CK2 modification is found at threonine 770. Positions glutamine 794–lysine 925 constitute an RLR CTR domain. Cysteine 810 is a Zn(2+) binding site. Lysine 812 participates in a covalent cross-link: Glycyl lysine isopeptide (Lys-Gly) (interchain with G-Cter in ubiquitin). Cysteine 813 is a Zn(2+) binding site. A phosphoserine; by CK2 mark is found at serine 854 and serine 855. Lysine 858 is modified (N6-acetyllysine). Cysteine 864 and cysteine 869 together coordinate Zn(2+). At lysine 909 the chain carries N6-acetyllysine.

This sequence belongs to the helicase family. RLR subfamily. In terms of assembly, monomer; maintained as a monomer in an autoinhibited state. Upon binding of viral RNAs and conformational shift, homooligomerizes and forms filaments on these molecules. Interacts (via tandem CARD domain) with MAVS/IPS1 promoting its filamentation. Interacts with DHX58/LGP2, IKBKE, TBK1 and STING1. Interacts (via CARD domain) with TRIM25 (via SPRY domain). Interacts (double-stranded RNA-bound oligomeric form) with RNF135 (homodimer); involved in RNA length-dependent activation of the RIG-I signaling pathway. Interacts with CYLD. Interacts with NLRC5; blocks the interaction of MAVS/IPS1 to RIGI. Interacts with SRC. Interacts with DDX60. Interacts with isoform 2 of ZC3HAV1 (via zinc-fingers) in an RNA-dependent manner. Interacts (via tandem CARD domain) with SEC14L1; the interaction is direct and impairs the interaction of RIGI with MAVS/IPS1. Interacts with VCP/p97; interaction is direct and allows the recruitment of RNF125 and subsequent ubiquitination and degradation. Interacts with NOP53; may regulate RIGI through USP15-mediated 'Lys-63'-linked deubiquitination. Interacts with SIGLEC10, CBL and PTPN11; within a negative feedback loop leading to RIGI degradation. Interacts with LRRC25. Interacts with ZCCHC3; leading to activation of RIGI. Interacts with RNF123. Interacts with UBE2D3 and UBE2N; E2 ubiquitin ligases involved in RNF135-mediated ubiquitination of RIGI and activation of the RIG-I signaling pathway. Interacts with IFIT3. Interacts with DDX3X. Interacts with RTN3. Interacts with ARL16; this interaction is GTP-dependent and induced upon viral infection; this interaction suppresses the RNA sensing activity of RIGI. Interacts with DHX16; this interaction enhances RIGI-mediated antiviral response. Interacts with IRGM; promoting RIGI degradation. Interacts with IFI6; this interaction inhibits RIGI activation. Interacts with ECSIT; this interaction bridges RIGI to the MAVS complex at the mitochondrion. Interacts with YWHAE; this interaction drives RIGI at the mitochondrion. (Microbial infection) Interacts with protein Z of Guanarito virus, Machupo virus, Junin arenavirus and Sabia virus. This interaction disrupts its interaction with MAVS/IPS1, impeding downstream IRF3 and NF-kappa-B activation and resulting in decreased IFN-beta induction. As to quaternary structure, (Microbial infection) Interacts (via CARD domain) with Human respiratory syncytial virus A non-structural protein 2 (NS2) and this interaction disrupts its interaction with MAVS/IPS1, impeding downstream IRF3 activation. In terms of assembly, (Microbial infection) Interacts with Rotavirus A non-structural protein 1 (NSP1) and this interaction induces down-regulation of RIGI. (Microbial infection) Interacts with paramyxoviruses (Sendai virus, Nipah virus, Measles virus and Parainfluenza virus 5) protein V; this interaction inhibits TRIM25-mediated ubiquitination of RIG-I and prevents downstream RIG-I signaling thereby inhibiting the IFN responses. As to quaternary structure, (Microbial infection) Interacts with herpes simplex virus 1 protein US11; this interaction prevents the interaction of MAVS/IPS1 to RIGI. In terms of assembly, (Microbial infection) Interacts with herpes simplex virus 1 protein UL37; this interaction deaminates RIGI and inhibits its activation. (Microbial infection) Interacts with Severe fever with thrombocytopenia virus (SFTSV) NSs; this interaction this interaction sequesters RIGI in NSs-induced cytoplasmic inclusion bodies thereby inhibiting the IFN responses. Post-translationally, phosphorylated in resting cells and dephosphorylated in RNA virus-infected cells. Phosphorylation at Thr-770, Ser-854 and Ser-855 results in inhibition of its activity while dephosphorylation at these sites results in its activation. Ubiquitinated. 'Lys-63' ubiquitination by RNF135, which occurs after RNA-binding and homodimerization, releases the autoinhibition of the CARD domains by the RLR CTR domain, an essential step in the activation of the RIG-I signaling pathway. Lys-172 is the critical site of ubiquitination for MAVS/IPS1 binding and to induce anti-viral signal transduction. Lys-154, Lys-164 and Lys-172 are shared sites for RNF135-mediated and TRIM4-mediated ubiquitination. Also undergoes 'Lys-48' ubiquitination at Lys-181 by RNF125 that leads to proteasomal degradation. 'Lys-48' ubiquitination follows viral infection and is enhanced by 'Lys-63'-linked ubiquitination of the CARD domains that promotes interaction with VCP/p97 and subsequent recruitment of RNF125. Within a negative feedback loop involving SIGLEC10 and PTPN11, 'Lys-48' ubiquitination at Lys-812 by CBL also elicits the proteasomal degradation of RIGI. Deubiquitinated by CYLD, a protease that selectively cleaves 'Lys-63'-linked ubiquitin chains. Also probably deubiquitinated by USP17L2/USP17 that cleaves 'Lys-48'- and 'Lys-63'-linked ubiquitin chains and positively regulates the receptor. Ubiquitinated by TRIM40 via 'Lys-48'-linked ubiquitination; leading to proteasomal degradation. Deubiquitinated by USP27X that cleaves 'Lys-63'-linked ubiquitin chains and inhibits the innate immune receptor activity. Deubiquitinated by USP3 that also cleaves 'Lys-63'-linked ubiquitin chains and inhibits the innate immune receptor activity. Undergoes 'Lys-48'-linked ubiquitination catalyzed by MARCHF5 at Lys-193 and Lys-203, leading to proteasomal degradation. In terms of processing, phosphorylated at Ser-8 and Thr-170; these phosphorylations suppresse the TRIM25-mediated 'Lys-63'-linked ubiquitination of RIG-I and thereby prevents RIG-I downstream signaling. Dephosphorylated by phosphatases PPP1CA/PPP1CC; this step is essential to activate RIGI and initiate downstream signaling. Post-translationally, ISGylated. Conjugated to ubiquitin-like protein ISG15 upon IFN-beta stimulation. ISGylation negatively regulates its function in antiviral signaling response. Sumoylated, probably by MUL1; inhibiting its polyubiquitination. In terms of processing, acetylated in response to RNA virus infection. Deacetylated by HDAC6 in the presence of viral mRNAs which is required for detection of viral RNA by RIGI. Post-translationally, (Microbial infection) Deamidated on Asn-495 and Asn-549 by herpes simplex virus 1 protein UL37. These modifications eliminate RIGI detection of viral RNA and restriction of viral replication. Degraded via selective autophagy following interaction with IRGM. IRGM promotes RIGI recruitment to autophagosome membranes, promoting its SQSTM1/p62-dependent autophagic degradation. In terms of processing, (Microbial infection) Cleaved by the protease 3C of coxsackievirus B3, poliovirus and enterovirus 71 allowing the virus to disrupt the host type I interferon production. Post-translationally, (Microbial infection) Phosphorylated at Ser-8 by herpes simplex virus 1 protein US3 leading to inhibition of critical RIGI activation steps. In terms of tissue distribution, present in vascular smooth cells (at protein level).

It is found in the cytoplasm. The protein resides in the cell projection. It localises to the ruffle membrane. Its subcellular location is the cytoskeleton. The protein localises to the cell junction. It is found in the tight junction. The enzyme catalyses ATP + H2O = ADP + phosphate + H(+). In terms of biological role, innate immune receptor that senses cytoplasmic viral nucleic acids and activates a downstream signaling cascade leading to the production of type I interferons and pro-inflammatory cytokines. Forms a ribonucleoprotein complex with viral RNAs on which it homooligomerizes to form filaments. The homooligomerization allows the recruitment of RNF135 an E3 ubiquitin-protein ligase that activates and amplifies the RIG-I-mediated antiviral signaling in an RNA length-dependent manner through ubiquitination-dependent and -independent mechanisms. Upon activation, associates with mitochondria antiviral signaling protein (MAVS/IPS1) that activates the IKK-related kinases TBK1 and IKBKE which in turn phosphorylate the interferon regulatory factors IRF3 and IRF7, activating transcription of antiviral immunological genes including the IFN-alpha and IFN-beta interferons. Ligands include 5'-triphosphorylated ssRNAs and dsRNAs but also short dsRNAs (&lt;1 kb in length). In addition to the 5'-triphosphate moiety, blunt-end base pairing at the 5'-end of the RNA is very essential. Overhangs at the non-triphosphorylated end of the dsRNA RNA have no major impact on its activity. A 3'overhang at the 5'triphosphate end decreases and any 5'overhang at the 5' triphosphate end abolishes its activity. Detects both positive and negative strand RNA viruses including members of the families Paramyxoviridae: Human respiratory syncytial virus and measles virus (MeV), Rhabdoviridae: vesicular stomatitis virus (VSV), Orthomyxoviridae: influenza A and B virus, Flaviviridae: Japanese encephalitis virus (JEV), hepatitis C virus (HCV), dengue virus (DENV) and west Nile virus (WNV). It also detects rotaviruses and reoviruses. Detects and binds to SARS-CoV-2 RNAs which is inhibited by m6A RNA modifications. Also involved in antiviral signaling in response to viruses containing a dsDNA genome such as Epstein-Barr virus (EBV). Detects dsRNA produced from non-self dsDNA by RNA polymerase III, such as Epstein-Barr virus-encoded RNAs (EBERs). May play important roles in granulocyte production and differentiation, bacterial phagocytosis and in the regulation of cell migration. The sequence is that of Antiviral innate immune response receptor RIG-I from Homo sapiens (Human).